Here is a 433-residue protein sequence, read N- to C-terminus: Enolase (433 aa).

Residues 37–59 (RAAVPSGASTGEHEAVELRDGDK) are disordered. The span at 47-59 (GEHEAVELRDGDK) shows a compositional bias: basic and acidic residues. Glutamine 166 is a binding site for (2R)-2-phosphoglycerate. The Proton donor role is filled by glutamate 208. Residues aspartate 245, glutamate 291, and aspartate 318 each contribute to the Mg(2+) site. Lysine 343, arginine 372, serine 373, and lysine 394 together coordinate (2R)-2-phosphoglycerate. The Proton acceptor role is filled by lysine 343.

This sequence belongs to the enolase family. Requires Mg(2+) as cofactor.

It localises to the cytoplasm. It is found in the secreted. The protein resides in the cell surface. The enzyme catalyses (2R)-2-phosphoglycerate = phosphoenolpyruvate + H2O. It participates in carbohydrate degradation; glycolysis; pyruvate from D-glyceraldehyde 3-phosphate: step 4/5. Its function is as follows. Catalyzes the reversible conversion of 2-phosphoglycerate (2-PG) into phosphoenolpyruvate (PEP). It is essential for the degradation of carbohydrates via glycolysis. This chain is Enolase, found in Leptospira biflexa serovar Patoc (strain Patoc 1 / Ames).